We begin with the raw amino-acid sequence, 165 residues long: Urease accessory protein UreE (165 aa).

Belongs to the UreE family.

The protein localises to the cytoplasm. In terms of biological role, involved in urease metallocenter assembly. Binds nickel. Probably functions as a nickel donor during metallocenter assembly. This is Urease accessory protein UreE from Micrococcus luteus (strain ATCC 4698 / DSM 20030 / JCM 1464 / CCM 169 / CCUG 5858 / IAM 1056 / NBRC 3333 / NCIMB 9278 / NCTC 2665 / VKM Ac-2230) (Micrococcus lysodeikticus).